Here is a 530-residue protein sequence, read N- to C-terminus: Ubiquitin carboxyl-terminal hydrolase 17-like protein 21 (530 aa).

Residues 80–375 (AGLQNMGNTC…QAYVLFYIQK (296 aa)) enclose the USP domain. Catalysis depends on Cys89, which acts as the Nucleophile. His334 serves as the catalytic Proton acceptor. Basic and acidic residues-rich tracts occupy residues 382–392 (SESVSRGREPR) and 398–412 (DTDR…KRDH). Disordered regions lie at residues 382–412 (SESV…KRDH) and 477–530 (NHHP…LVCQ). Residues 493–505 (TPTHQESMNTGTL) are compositionally biased toward polar residues. The segment covering 510 to 524 (GRARRSKGKNKHSKR) has biased composition (basic residues).

This sequence belongs to the peptidase C19 family. USP17 subfamily.

Its subcellular location is the nucleus. It is found in the endoplasmic reticulum. The enzyme catalyses Thiol-dependent hydrolysis of ester, thioester, amide, peptide and isopeptide bonds formed by the C-terminal Gly of ubiquitin (a 76-residue protein attached to proteins as an intracellular targeting signal).. In terms of biological role, deubiquitinating enzyme that removes conjugated ubiquitin from specific proteins to regulate different cellular processes that may include cell proliferation, progression through the cell cycle, apoptosis, cell migration, and the cellular response to viral infection. The polypeptide is Ubiquitin carboxyl-terminal hydrolase 17-like protein 21 (USP17L21) (Homo sapiens (Human)).